We begin with the raw amino-acid sequence, 359 residues long: GDSL esterase/lipase At2g30310 (359 aa).

Positions 1-28 are cleaved as a signal peptide; that stretch reads MSTSKTIVFGLFVATLLVSCNVAANATT. The active-site Nucleophile is Ser41. Asn103 and Asn325 each carry an N-linked (GlcNAc...) asparagine glycan. Catalysis depends on residues Asp333 and His336.

The protein belongs to the 'GDSL' lipolytic enzyme family.

Its subcellular location is the secreted. The sequence is that of GDSL esterase/lipase At2g30310 from Arabidopsis thaliana (Mouse-ear cress).